Reading from the N-terminus, the 145-residue chain is 3-dehydroquinate dehydratase (145 aa).

Tyr23 serves as the catalytic Proton acceptor. Substrate contacts are provided by Asn75, His81, and Asp88. Residue His101 is the Proton donor of the active site. Residues 102–103 and Arg112 contribute to the substrate site; that span reads LS.

Belongs to the type-II 3-dehydroquinase family. As to quaternary structure, homododecamer.

The enzyme catalyses 3-dehydroquinate = 3-dehydroshikimate + H2O. Its pathway is metabolic intermediate biosynthesis; chorismate biosynthesis; chorismate from D-erythrose 4-phosphate and phosphoenolpyruvate: step 3/7. Catalyzes a trans-dehydration via an enolate intermediate. The sequence is that of 3-dehydroquinate dehydratase from Legionella pneumophila (strain Lens).